The sequence spans 439 residues: Gnt-II system L-idonate transporter (439 aa).

Residues 1–11 (MPLIIIAAGVA) lie on the Periplasmic side of the membrane. A helical membrane pass occupies residues 12–34 (LLLILMIGFKVNGFIALVLVAAV). The Cytoplasmic portion of the chain corresponds to 35-53 (VGFAEGMDAQAVLHSIQNG). The helical transmembrane segment at 54 to 76 (IGSTLGGLAMILGFGAMLGKLIS) threads the bilayer. Over 77 to 96 (DTGAAQRIATTLIATFGKKR) the chain is Periplasmic. Residues 97–114 (VQWALVITGLVVGLAMFF) traverse the membrane as a helical segment. Residues 115–118 (EVGF) lie on the Cytoplasmic side of the membrane. The helical transmembrane segment at 119-141 (VLLLPLVFTIVASSGLPLLYVGV) threads the bilayer. Residues 142 to 170 (PMVAALSVTHCFLPPHPGPTAIATIFEAN) lie on the Periplasmic side of the membrane. Residues 171–193 (LGTTLLYGFIITIPTVIVAGPLF) form a helical membrane-spanning segment. The Cytoplasmic segment spans residues 194-218 (SKLLTRFEKAPPEGLFNPHLFSEEE). A helical membrane pass occupies residues 219–241 (MPSFWNSIFAAVIPVILMAIAAV). The Periplasmic segment spans residues 242–253 (CEITLPKTNTVR). Residues 254-276 (LFFEFVGNPAVALFIAIVIAIFT) traverse the membrane as a helical segment. The Cytoplasmic portion of the chain corresponds to 277-290 (LGRRNGRTIEQIMD). A helical transmembrane segment spans residues 291–310 (IIGDSIGAIAMIVFIIAGGG). Topologically, residues 311–322 (AFKQVLVDSGVG) are periplasmic. The helical transmembrane segment at 323–345 (HYISHLMTGTTLSPLLMCWTVAA) threads the bilayer. The Cytoplasmic segment spans residues 346–348 (LLR). A helical membrane pass occupies residues 349–371 (IALGSATVAAITTAGVVLPIINV). Residues 372 to 377 (THADPA) are Periplasmic-facing. A helical membrane pass occupies residues 378 to 400 (LMVLATGAGSVIASHVNDPGFWL). Residues 401–414 (FKGYFNLTVGETLR) are Cytoplasmic-facing. A helical transmembrane segment spans residues 415-437 (TWTVMETLISIMGLLGVLAINAV). At 438–439 (LH) the chain is on the periplasmic side.

It belongs to the GntP permease family.

Its subcellular location is the cell inner membrane. The catalysed reaction is L-idonate(in) + H(+)(in) = L-idonate(out) + H(+)(out). The enzyme catalyses D-gluconate(in) + H(+)(in) = D-gluconate(out) + H(+)(out). It catalyses the reaction 5-dehydro-D-gluconate(in) + H(+)(in) = 5-dehydro-D-gluconate(out) + H(+)(out). It functions in the pathway carbohydrate acid metabolism; L-idonate degradation. Functionally, transporter which is probably involved in L-idonate metabolism. Transports L-idonate from the periplasm across the inner membrane. Can also transport D-gluconate and 5-keto-D-gluconate. It has been reported that gluconate uptake probably occurs via a proton-symport mechanism in E.coli. This is Gnt-II system L-idonate transporter from Escherichia coli (strain K12).